Here is a 511-residue protein sequence, read N- to C-terminus: GMP synthase [glutamine-hydrolyzing] (511 aa).

Residues 6–196 (LVLVLDFGSQ…VFDVCGCTGD (191 aa)) form the Glutamine amidotransferase type-1 domain. Cysteine 83 (nucleophile) is an active-site residue. Catalysis depends on residues histidine 170 and glutamate 172. One can recognise a GMPS ATP-PPase domain in the interval 197–386 (WSIENFIDME…LGVPDRIVWR (190 aa)). Residue 224-230 (SGGVDSS) coordinates ATP.

As to quaternary structure, homodimer.

The enzyme catalyses XMP + L-glutamine + ATP + H2O = GMP + L-glutamate + AMP + diphosphate + 2 H(+). It functions in the pathway purine metabolism; GMP biosynthesis; GMP from XMP (L-Gln route): step 1/1. Functionally, catalyzes the synthesis of GMP from XMP. The polypeptide is GMP synthase [glutamine-hydrolyzing] (Oceanobacillus iheyensis (strain DSM 14371 / CIP 107618 / JCM 11309 / KCTC 3954 / HTE831)).